The chain runs to 466 residues: 3-isopropylmalate dehydratase large subunit (466 aa).

Residues Cys347, Cys407, and Cys410 each contribute to the [4Fe-4S] cluster site.

This sequence belongs to the aconitase/IPM isomerase family. LeuC type 1 subfamily. Heterodimer of LeuC and LeuD. It depends on [4Fe-4S] cluster as a cofactor.

It carries out the reaction (2R,3S)-3-isopropylmalate = (2S)-2-isopropylmalate. Its pathway is amino-acid biosynthesis; L-leucine biosynthesis; L-leucine from 3-methyl-2-oxobutanoate: step 2/4. Catalyzes the isomerization between 2-isopropylmalate and 3-isopropylmalate, via the formation of 2-isopropylmaleate. The chain is 3-isopropylmalate dehydratase large subunit from Shewanella loihica (strain ATCC BAA-1088 / PV-4).